Reading from the N-terminus, the 217-residue chain is UPF0502 protein swp_3027 (217 aa).

Belongs to the UPF0502 family.

The sequence is that of UPF0502 protein swp_3027 from Shewanella piezotolerans (strain WP3 / JCM 13877).